The chain runs to 172 residues: Auxin-responsive protein IAA30 (172 aa).

Over residues 1–18 the composition is skewed to low complexity; that stretch reads MGRGRSSSSSSIESSCKS. The tract at residues 1–28 is disordered; the sequence is MGRGRSSSSSSIESSCKSNPFGVSSSNT. Positions 35 to 39 match the EAR-like (transcriptional repression) motif; sequence LRLGL. The PB1 domain maps to 82 to 171; it reads SFYVKVNMEG…RRLKISRAYH (90 aa).

This sequence belongs to the Aux/IAA family. In terms of assembly, homodimers and heterodimers.

Its subcellular location is the nucleus. Aux/IAA proteins are short-lived transcriptional factors that function as repressors of early auxin response genes at low auxin concentrations. Repression is thought to result from the interaction with auxin response factors (ARFs), proteins that bind to the auxin-responsive promoter element (AuxRE). Formation of heterodimers with ARF proteins may alter their ability to modulate early auxin response genes expression. In Arabidopsis thaliana (Mouse-ear cress), this protein is Auxin-responsive protein IAA30 (IAA30).